The primary structure comprises 357 residues: Histidine biosynthesis bifunctional protein HisB (357 aa).

The tract at residues 1-168 (MTPILFIDRD…GIAHALADAP (168 aa)) is histidinol-phosphatase. The Nucleophile role is filled by D8. 3 residues coordinate Mg(2+): D8, D10, and D128. The active-site Proton donor is D10. The tract at residues 169–357 (RTAVVQRDTK…TALPSTKGAL (189 aa)) is imidazoleglycerol-phosphate dehydratase.

It in the N-terminal section; belongs to the histidinol-phosphatase family. The protein in the C-terminal section; belongs to the imidazoleglycerol-phosphate dehydratase family. Mg(2+) is required as a cofactor.

It localises to the cytoplasm. The catalysed reaction is D-erythro-1-(imidazol-4-yl)glycerol 3-phosphate = 3-(imidazol-4-yl)-2-oxopropyl phosphate + H2O. It carries out the reaction L-histidinol phosphate + H2O = L-histidinol + phosphate. Its pathway is amino-acid biosynthesis; L-histidine biosynthesis; L-histidine from 5-phospho-alpha-D-ribose 1-diphosphate: step 6/9. The protein operates within amino-acid biosynthesis; L-histidine biosynthesis; L-histidine from 5-phospho-alpha-D-ribose 1-diphosphate: step 8/9. The polypeptide is Histidine biosynthesis bifunctional protein HisB (Stenotrophomonas maltophilia (strain K279a)).